The chain runs to 427 residues: Glutamate-1-semialdehyde 2,1-aminomutase (427 aa).

Lys-265 is subject to N6-(pyridoxal phosphate)lysine.

Belongs to the class-III pyridoxal-phosphate-dependent aminotransferase family. HemL subfamily. In terms of assembly, homodimer. Requires pyridoxal 5'-phosphate as cofactor.

It is found in the cytoplasm. It carries out the reaction (S)-4-amino-5-oxopentanoate = 5-aminolevulinate. It participates in porphyrin-containing compound metabolism; protoporphyrin-IX biosynthesis; 5-aminolevulinate from L-glutamyl-tRNA(Glu): step 2/2. The polypeptide is Glutamate-1-semialdehyde 2,1-aminomutase (Burkholderia pseudomallei (strain 1710b)).